Consider the following 230-residue polypeptide: Urease accessory protein UreG (230 aa).

The tract at residues 1–31 (MPPHFLSADSTGQPHRHADRPKRVRTPGEPL) is disordered. The span at 14–25 (PHRHADRPKRVR) shows a compositional bias: basic residues. A GTP-binding site is contributed by 37 to 44 (GPVGSGKT).

It belongs to the SIMIBI class G3E GTPase family. UreG subfamily. As to quaternary structure, homodimer. UreD, UreF and UreG form a complex that acts as a GTP-hydrolysis-dependent molecular chaperone, activating the urease apoprotein by helping to assemble the nickel containing metallocenter of UreC. The UreE protein probably delivers the nickel.

Its subcellular location is the cytoplasm. Its function is as follows. Facilitates the functional incorporation of the urease nickel metallocenter. This process requires GTP hydrolysis, probably effectuated by UreG. The polypeptide is Urease accessory protein UreG (Mycobacterium sp. (strain JLS)).